The following is a 241-amino-acid chain: MSSSKETAKSLIQTKSRSSIRNMFDEVAPTYDFLNHLLSLGIDNYWRVVAAKKARKQVEGEREPKILDVATGTGDLAASMAKIPGAKVTGYDLSPEMLAIARKKYPNIEFHEGFAEKMPFADQSFHVVSAGFGVRNFEDLAQGMKEFHRVLKPGGCAYIIEPMIPRNPVMKKLYLIYFKNVLPKIAGMFSKSTFAYDYLPNSVEQFPQAEAFTKILKQAGFKKAEFFPMTFETSILYVATK.

Threonine 73 and aspartate 92 together coordinate S-adenosyl-L-methionine.

It belongs to the class I-like SAM-binding methyltransferase superfamily. MenG/UbiE family.

It catalyses the reaction a 2-demethylmenaquinol + S-adenosyl-L-methionine = a menaquinol + S-adenosyl-L-homocysteine + H(+). The protein operates within quinol/quinone metabolism; menaquinone biosynthesis; menaquinol from 1,4-dihydroxy-2-naphthoate: step 2/2. In terms of biological role, methyltransferase required for the conversion of demethylmenaquinol (DMKH2) to menaquinol (MKH2). The protein is Demethylmenaquinone methyltransferase of Chlorobaculum parvum (strain DSM 263 / NCIMB 8327) (Chlorobium vibrioforme subsp. thiosulfatophilum).